The chain runs to 361 residues: MAQPVQSIDVLLIEHAELELALADPELHSNPAEARKAGRRFARLAPIVATHRKLISARDDLQTARELAAGDESFADEIAELESRIAELTTQLTDMLAPHDPHGPDDIVLEVKSGEGGEESALFAADLARMYIRYAERHGWTVTVLDETTSDLGGYKDATLAISHKGASDGDAVDGVWSRMKFEGGVHRVQRVPVTESQGRVHTSAAGVLVYPEPEEIGEVHIDESDLRIDVYRSSGKGGQGVNTTDSAVRITHLPTGVVVTCQNERSQLQNKTRALQVLAARLQAMAEEQALANASADRASQIRTVDRSERIRTYNFPENRITDHRIGYKAHNLDQVLDGDLDALFDALSAADKQSRLQQV.

Position 240 is an N5-methylglutamine (Gln-240).

This sequence belongs to the prokaryotic/mitochondrial release factor family. Methylated by PrmC. Methylation increases the termination efficiency of RF1.

The protein localises to the cytoplasm. In terms of biological role, peptide chain release factor 1 directs the termination of translation in response to the peptide chain termination codons UAG and UAA. This Mycobacterium leprae (strain Br4923) protein is Peptide chain release factor 1.